The chain runs to 513 residues: Sphingolipid C9-methyltransferase 1 (513 aa).

The next 2 membrane-spanning stretches (helical) occupy residues 63–83 and 85–105; these read FLVAALLGIPQWLSWKLGGGL and TAIFLSIFTTIPVLAVIWTVM. S-adenosyl-L-methionine contacts are provided by residues 228-229, 265-273, 291-296, and 321-322; these read YT, LLDIGCGWG, TLARNQ, and YR.

The protein belongs to the CFA/CMAS family.

It localises to the membrane. It carries out the reaction a (4E,8E)-4-sphinga-4,8-dienine ceramide + S-adenosyl-L-methionine = a 9-methyl-(4E,8E)-sphinga-4,8-dienine ceramide + S-adenosyl-L-homocysteine + H(+). It participates in lipid metabolism; sphingolipid metabolism. Catalyzes methylation of the sphingoid base component of glucosylceramides (GluCers) at the C9-position. Sphingolipid C9-methylation requires 4,8-desaturated ceramides as substrates. Glucosylceramides play important roles in the growth, differentiation and pathogenicity. The methyl group at the C9-position distinguishes fungal glucosylceramides from those of plants and animals, and may thus play a role in host-pathogen interactions enabling the host to recognize the fungal attack and initiate specific defense responses. However, C-9 methylation of GlcCers is not essential for the sensitivity of F.graminearum to plant defensins MsDef1 and RsAFP2. The protein is Sphingolipid C9-methyltransferase 1 of Gibberella zeae (strain ATCC MYA-4620 / CBS 123657 / FGSC 9075 / NRRL 31084 / PH-1) (Wheat head blight fungus).